Reading from the N-terminus, the 390-residue chain is Cell division protein FtsZ (390 aa).

GTP is bound by residues 21–25, 108–110, Glu-139, Arg-143, and Asp-187; these read GGGNN and GTG. The disordered stretch occupies residues 315-390; it reads FDDKPTSHGR…EERRSRRTRR (76 aa). A compositionally biased stretch (polar residues) spans 326 to 360; the sequence is SGSTGFGTSVNTSSNATSKDESFTSNSSNAQATDS. Residues 361 to 384 show a composition bias toward basic and acidic residues; that stretch reads VSERTHTTKEDDIPSFIRNREERR.

Belongs to the FtsZ family. In terms of assembly, homodimer. Polymerizes to form a dynamic ring structure in a strictly GTP-dependent manner. Interacts directly with several other division proteins.

The protein localises to the cytoplasm. Essential cell division protein that forms a contractile ring structure (Z ring) at the future cell division site. The regulation of the ring assembly controls the timing and the location of cell division. One of the functions of the FtsZ ring is to recruit other cell division proteins to the septum to produce a new cell wall between the dividing cells. Binds GTP and shows GTPase activity. This chain is Cell division protein FtsZ, found in Staphylococcus aureus (strain NCTC 8325 / PS 47).